The primary structure comprises 276 residues: Ribosomal RNA small subunit methyltransferase A (276 aa).

6 residues coordinate S-adenosyl-L-methionine: histidine 15, leucine 17, glycine 42, glutamate 64, aspartate 89, and asparagine 108.

Belongs to the class I-like SAM-binding methyltransferase superfamily. rRNA adenine N(6)-methyltransferase family. RsmA subfamily.

The protein resides in the cytoplasm. It catalyses the reaction adenosine(1518)/adenosine(1519) in 16S rRNA + 4 S-adenosyl-L-methionine = N(6)-dimethyladenosine(1518)/N(6)-dimethyladenosine(1519) in 16S rRNA + 4 S-adenosyl-L-homocysteine + 4 H(+). Its function is as follows. Specifically dimethylates two adjacent adenosines (A1518 and A1519) in the loop of a conserved hairpin near the 3'-end of 16S rRNA in the 30S particle. May play a critical role in biogenesis of 30S subunits. The protein is Ribosomal RNA small subunit methyltransferase A of Prochlorococcus marinus (strain MIT 9312).